We begin with the raw amino-acid sequence, 364 residues long: tRNA/tmRNA (uracil-C(5))-methyltransferase (364 aa).

Gln-188, Tyr-216, Asn-221, Glu-237, and Asp-297 together coordinate S-adenosyl-L-methionine. Cys-322 (nucleophile) is an active-site residue. The active-site Proton acceptor is Glu-356.

Belongs to the class I-like SAM-binding methyltransferase superfamily. RNA M5U methyltransferase family. TrmA subfamily.

It carries out the reaction uridine(54) in tRNA + S-adenosyl-L-methionine = 5-methyluridine(54) in tRNA + S-adenosyl-L-homocysteine + H(+). The catalysed reaction is uridine(341) in tmRNA + S-adenosyl-L-methionine = 5-methyluridine(341) in tmRNA + S-adenosyl-L-homocysteine + H(+). Its function is as follows. Dual-specificity methyltransferase that catalyzes the formation of 5-methyluridine at position 54 (m5U54) in all tRNAs, and that of position 341 (m5U341) in tmRNA (transfer-mRNA). The protein is tRNA/tmRNA (uracil-C(5))-methyltransferase of Teredinibacter turnerae (strain ATCC 39867 / T7901).